The primary structure comprises 517 residues: uncharacterized protein (517 aa).

Disordered stretches follow at residues 16 to 148 (KDES…TITK), 156 to 175 (VNKEINNNNNNNNNNNNTTT), and 216 to 351 (KLEK…EENE). Positions 48 to 75 (NNNNNNNNTTTTNNNTNNSNTSTSNNSK) are enriched in low complexity. A compositionally biased stretch (acidic residues) spans 84–112 (FDDDDDDGDEEDEEEEDDDDDDDDDDDET). Over residues 127–143 (QPQPQPQPQPQPQPPIK) the composition is skewed to pro residues. Polar residues predominate over residues 236–252 (VSSTLSNSFDPNIIHNQ). The segment covering 254-266 (SPPPPPISIPIPL) has biased composition (pro residues). Composition is skewed to low complexity over residues 271-320 (NLNN…NSNI) and 327-347 (SSSMVNNVNNNSSDNSSSNNN). Residues 340-452 (DNSSSNNNEE…HQNQQNSMNN (113 aa)) are a coiled coil.

The protein belongs to the ENTR1 family.

This is an uncharacterized protein from Dictyostelium discoideum (Social amoeba).